We begin with the raw amino-acid sequence, 201 residues long: FMN-dependent NADH:quinone oxidoreductase (201 aa).

92–95 (MWNL) is a binding site for FMN.

This sequence belongs to the azoreductase type 1 family. As to quaternary structure, homodimer. FMN serves as cofactor.

It catalyses the reaction 2 a quinone + NADH + H(+) = 2 a 1,4-benzosemiquinone + NAD(+). The catalysed reaction is N,N-dimethyl-1,4-phenylenediamine + anthranilate + 2 NAD(+) = 2-(4-dimethylaminophenyl)diazenylbenzoate + 2 NADH + 2 H(+). Functionally, quinone reductase that provides resistance to thiol-specific stress caused by electrophilic quinones. In terms of biological role, also exhibits azoreductase activity. Catalyzes the reductive cleavage of the azo bond in aromatic azo compounds to the corresponding amines. This is FMN-dependent NADH:quinone oxidoreductase from Caldicellulosiruptor saccharolyticus (strain ATCC 43494 / DSM 8903 / Tp8T 6331).